Reading from the N-terminus, the 594-residue chain is MENVTEGTWDSLPQKLNGSIRRTLEELKFTHMTPVQSATIPLFMNNKDIAAEAITGSGKTLAFVIPLLEILLKREEKLKKNQVGALIITPTRELAVQIDEVLSCFTKHFPQFSQILLIGGSNPVDDVRKFKEHGGNIIVATPGRLEDMFRRQADGLDLVICVKTLDVLILDEADRLLDMGFEASINTILGFLPKQRRTGLFSATQTQELENLVRAGLRNPVRIAVKEKGVAATSTQKTPIRLQNYYMICKADEKFNKLIAFLQKRKQEKHLVFFSTCACVEYYGKALEMLLKPVKVMCIHGKMKHKRNRIFTEFRKINSGILVCTDVMARGIDIHEVNWVVQYDPPSSASAFVHRCGRTARIGHHGSALVFLLPMEESYVSFLSINQKCPLQEMTELIISVDLLPKLKAMAETDRAVFEKGMKAFVSYVQAYAKHECNLIFRVKDLDFSSLARGFGLLRMPRMPELKGKNFSDFVSTLIDTDSIAYKDKNREKQRQKMLKERKEKLETEGRKHFAKNKAWSKQKARKEKKQKVALKRKKEEGSDIDEGDVDELLQDTRLLKRLKKGKITEEEFEKQLTAVGGKSEVEEGSEDSN.

Residues 9–37 (WDSLPQKLNGSIRRTLEELKFTHMTPVQS) carry the Q motif motif. A Helicase ATP-binding domain is found at 40 to 223 (IPLFMNNKDI…RAGLRNPVRI (184 aa)). Residue 53 to 60 (AITGSGKT) coordinates ATP. Positions 171–174 (DEAD) match the DEAD box motif. The region spanning 254 to 411 (KFNKLIAFLQ…DLLPKLKAMA (158 aa)) is the Helicase C-terminal domain. A coiled-coil region spans residues 486–542 (YKDKNREKQRQKMLKERKEKLETEGRKHFAKNKAWSKQKARKEKKQKVALKRKKEEG). A compositionally biased stretch (basic and acidic residues) spans 502 to 512 (RKEKLETEGRK). The interval 502–548 (RKEKLETEGRKHFAKNKAWSKQKARKEKKQKVALKRKKEEGSDIDEG) is disordered. Residues 513 to 537 (HFAKNKAWSKQKARKEKKQKVALKR) are compositionally biased toward basic residues. Residues 532 to 561 (KVALKRKKEEGSDIDEGDVDELLQDTRLLK) form an important for nuclear localization region.

The protein belongs to the DEAD box helicase family. DDX55/SPB4 subfamily. In terms of assembly, interacts with 28S rRNA. Interacts with double-stranded RNA substrates in vitro; the interaction stimulates ATPase activity.

Its subcellular location is the nucleus. The protein localises to the nucleoplasm. It carries out the reaction ATP + H2O = ADP + phosphate + H(+). In terms of biological role, probable ATP-binding RNA helicase. Has ATPase activity and is involved in the maturation of precursor large subunit rRNAs. The sequence is that of ATP-dependent RNA helicase DDX55 (ddx55) from Xenopus laevis (African clawed frog).